Here is a 136-residue protein sequence, read N- to C-terminus: MGDKTKVQVSKLKPGRYIIIDGEPCRIVNITVSSPGKHGSAKARIEAVGIFDGKVRSIVKPTSAEVDVPIIDKRVGQVIAITPDTVQIMDMETYELYDVPIETGVEDEVKDQLKEGITVEYWETLGRIQIKKVRGE.

A Hypusine modification is found at lysine 37.

This sequence belongs to the eIF-5A family.

Its subcellular location is the cytoplasm. Functions by promoting the formation of the first peptide bond. The protein is Translation initiation factor 5A (eIF5A) of Thermococcus gammatolerans (strain DSM 15229 / JCM 11827 / EJ3).